We begin with the raw amino-acid sequence, 251 residues long: Ubiquinone/menaquinone biosynthesis C-methyltransferase UbiE (251 aa).

S-adenosyl-L-methionine contacts are provided by residues Thr-74, Asp-95, and 123–124 (NA).

Belongs to the class I-like SAM-binding methyltransferase superfamily. MenG/UbiE family.

It carries out the reaction a 2-demethylmenaquinol + S-adenosyl-L-methionine = a menaquinol + S-adenosyl-L-homocysteine + H(+). The catalysed reaction is a 2-methoxy-6-(all-trans-polyprenyl)benzene-1,4-diol + S-adenosyl-L-methionine = a 5-methoxy-2-methyl-3-(all-trans-polyprenyl)benzene-1,4-diol + S-adenosyl-L-homocysteine + H(+). The protein operates within quinol/quinone metabolism; menaquinone biosynthesis; menaquinol from 1,4-dihydroxy-2-naphthoate: step 2/2. Its pathway is cofactor biosynthesis; ubiquinone biosynthesis. Functionally, methyltransferase required for the conversion of demethylmenaquinol (DMKH2) to menaquinol (MKH2) and the conversion of 2-polyprenyl-6-methoxy-1,4-benzoquinol (DDMQH2) to 2-polyprenyl-3-methyl-6-methoxy-1,4-benzoquinol (DMQH2). This Pseudoalteromonas translucida (strain TAC 125) protein is Ubiquinone/menaquinone biosynthesis C-methyltransferase UbiE.